Here is a 349-residue protein sequence, read N- to C-terminus: Phloroglucinol synthase (349 aa).

Cys-138 is a catalytic residue.

Belongs to the thiolase-like superfamily. Chalcone/stilbene synthases family.

The enzyme catalyses 3 malonyl-CoA + 3 H(+) = 1,3,5-trihydroxybenzene + 3 CO2 + 3 CoA. The protein operates within antibiotic biosynthesis. Type III polyketide synthase that catalyzes the synthesis of phloroglucinol from three molecules of malonyl-CoA. In addition to its ability to produce phloroglucinol from malonyl-CoA, it exhibits broad substrate specificity, accepting C4-C12 aliphatic acyl-CoAs and phenylacetyl-CoA as the starters to form C6-polyoxoalkylated alpha-pyrones from sequential condensation with malonyl-CoA. The protein is Phloroglucinol synthase of Pseudomonas fluorescens (strain ATCC BAA-477 / NRRL B-23932 / Pf-5).